Here is a 485-residue protein sequence, read N- to C-terminus: Bcl-2-like protein 13 (485 aa).

The BH4 motif lies at 14–30; that stretch reads ETKYVVLSYLGLLSQEK. Phosphoserine is present on Ser38. Positions 100–116 match the BH3 motif; it reads MEDCLAHLGEKVSQELK. A BH1 motif is present at residues 147 to 157; it reads ASGWNKILVPL. The BH2 motif lies at 193-206; sequence YIIQQGGWGTVFSL. The interval 218 to 248 is disordered; sequence AEDSNDIYILPSDNSGQVSPPESPTVTTSWQ. Positions 229 to 248 are enriched in polar residues; that stretch reads SDNSGQVSPPESPTVTTSWQ. Residues 246–256 form an A repeat; that stretch reads SWQSESLPVSL. 11 positions are modified to phosphoserine: Ser259, Ser261, Ser303, Ser326, Ser371, Ser375, Ser410, Ser420, Ser426, Ser429, and Ser444. One copy of the A; approximate repeat lies at 261–271; sequence SWHTESLPVSL. The disordered stretch occupies residues 418-451; it reads EESLVEELSPASEKKPVPPSEGKSRLSPAGEMKP. The B repeat unit spans residues 425–441; sequence LSPASEKKPVPPSEGKS. The B; approximate repeat unit spans residues 443–459; sequence LSPAGEMKPMPLSEGKS. The chain crosses the membrane as a helical span at residues 460 to 480; sequence ILLFGGAAAVAILAVAIGVAL.

The protein belongs to the Bcl-2 family. In terms of assembly, monomer. In terms of tissue distribution, ubiquitous, with the highest levels of expression in heart, placenta and pancreas.

The protein resides in the mitochondrion membrane. The protein localises to the nucleus. Its function is as follows. May promote the activation of caspase-3 and apoptosis. The sequence is that of Bcl-2-like protein 13 (BCL2L13) from Homo sapiens (Human).